Consider the following 1284-residue polypeptide: MTIILFLVDTSSSMCQKAYVNGVQKTYLDIAKGAVETFLKYRQRTQDCLGDRYMLLTFEEPPANVKAGWKENHATFMNELKNLQSHGLTSMGESLRNAFDLLNLNRMQSGIDTYGQGRCPFYLEPSVIIVITDGGRYSYRNGVHQEIILPLSNQIPGTKFTKEPFRWDQRLFSLVLRMPGNKIDERVDGKVPHDDSPIERMCEVTGGRSYRVRSHYVLNQCIESLVQKVQPGVVLQFEPMLPKEATSATAGEAAGASTISGMGISSTSGAGPAPDIVFQPVKKMIYVQKHITQKTFPIGYWPLPEPYWPDSKAITLPPRDAHPKLKVLTPAVDEPQLVRSFPVDKYEIEGCPLTLQILNKREMNKCWQVIVTNGMHGFELPFGYLKAAPNFSQVHLYVLAYNYPALLPILHDLIHKYNMSPPSDLMYKFNAYVRSIPPYYCPFLRKALVNINVPYQLLQFLLPENVDNYLSPTIANQLKHIKNTAKQDQENLCMKVYKQLKQPKPPYRQVETGKLFTGAPLRRDLVRHPLLRDIFSKLHGEIDPVENYTIVVPQPTHQSSAKSHRNPFDIPRRDLVEEIAKMRETLLRPVSLVAKDSGHCLPIAEMGNYQEYLKNKDNPLREIEPTNVRQHMFGNPYKKDKHMVMVDEADLSDVAPMKSPNGNGPGGAPPGSPSGSGSPTGPGPSSPGSSPGGGSGPGMPGMPGMGGGMSGLMLGAGGSGGSSKKLDGTSRGRKRKAGPLPRSFEFRRSSTDSRSSSSGSESSTTGSAPGSPIPGATSSISGCDSAMGADGGPSSSCFDEDSNSNSSFVSSTSEASASDSGMSNSHLDPLRISFVFIEEETSDQDTPLNGYVHNFINGISDDAETGETEAVPGGASLPGASSANEPSSIGASPAVSATPATSVIPASNGSEVCSAVAAGSSSSISSSASSPGVLYVPLNGLTTHAAYSSNLGGPSSPLDNLSSLGGAAGGGGSGLLGVSKPGSLPLANGYGHGHSSAISPPSPLSLVPLSPLGTSTPAASSSGLSSSSAYFSHNDINDASEISRILQTCHNGTSSGSSVGAGASNSNLNGNGSTESGGGVSSDDHASLGGNSFDALKRTAGTAGSTAAGNPHYYWASGLNHHNNNNSSAAGAASGSTLSNNHNHRGHNNSSPNKLEVKINSSCGSSPTHNNGGMGSPGQSLPLIFTEEQREAARLHNVELRLQIFRDIRRPGRDYSQLLEHLNLVKGDQDMQSDFVDMCIVESLRFRRHRMASSIQEWWDRKQQLTAVGTNEATPSAEQAVAKS.

The region spanning 3-134 (IILFLVDTSS…PSVIIVITDG (132 aa)) is the VWFA domain. Disordered stretches follow at residues 653–824 (DVAP…GMSN), 864–895 (ETGE…SPAV), 1053–1086 (TSSG…DDHA), and 1125–1180 (NNSS…PGQS). Over residues 690-721 (SPGGGSGPGMPGMPGMGGGMSGLMLGAGGSGG) the composition is skewed to gly residues. 2 stretches are compositionally biased toward low complexity: residues 752–781 (DSRS…SSIS) and 803–824 (NSNS…GMSN). Positions 879–890 (GASSANEPSSIG) are enriched in polar residues. Composition is skewed to low complexity over residues 1053 to 1074 (TSSG…NGST) and 1125 to 1141 (NNSS…LSNN). Residues 1159–1171 (INSSCGSSPTHNN) are compositionally biased toward polar residues.

This sequence belongs to the Integrator subunit 6 family. Belongs to the multiprotein complex Integrator, at least composed of IntS1, IntS2, IntS3, IntS4, omd/IntS5, IntS6, defl/IntS7, IntS8, IntS9, IntS10, IntS11, IntS12, asun/IntS13, IntS14 and IntS15. The core complex associates with protein phosphatase 2A subunits mts/PP2A and Pp2A-29B, to form the Integrator-PP2A (INTAC) complex.

It is found in the nucleus. Its function is as follows. Component of the integrator complex, a multiprotein complex that terminates RNA polymerase II (Pol II) transcription in the promoter-proximal region of genes. The integrator complex provides a quality checkpoint during transcription elongation by driving premature transcription termination of transcripts that are unfavorably configured for transcriptional elongation: the complex terminates transcription by (1) catalyzing dephosphorylation of the C-terminal domain (CTD) of Pol II subunit Polr2A/Rbp1 and Spt5, and (2) degrading the exiting nascent RNA transcript via endonuclease activity. The integrator complex is also involved in the 3'-end processing of the U7 snRNA, and also the spliceosomal snRNAs U1, U2, U4 and U5. Within the integrator complex, IntS6 acts as a substrate adapter for protein phosphatase 2A (PP2A). The protein is Integrator complex subunit 6 of Drosophila melanogaster (Fruit fly).